The primary structure comprises 423 residues: COP9 signalosome complex subunit 3 (423 aa).

An N-acetylalanine modification is found at Ala-2. Positions Asn-197 to Glu-365 constitute a PCI domain. The disordered stretch occupies residues Gln-402–Ser-423. Phosphoserine is present on residues Ser-407, Ser-410, and Ser-423.

This sequence belongs to the CSN3 family. In terms of assembly, component of the CSN complex, composed of COPS1/GPS1, COPS2, COPS3, COPS4, COPS5, COPS6, COPS7 (COPS7A or COPS7B), COPS8 and COPS9 isoform 1. In the complex, it probably interacts directly with COPS1, COPS4, COPS8 and COPS9 isoform 1. Interacts with CK2 and PKD. Interacts with the translation initiation factor EIF3S6 and IKBKG. Interacts with ERCC6. Widely expressed. Expressed at high level in heart and skeletal muscle.

It localises to the cytoplasm. Its subcellular location is the nucleus. In terms of biological role, component of the COP9 signalosome complex (CSN), a complex involved in various cellular and developmental processes. The CSN complex is an essential regulator of the ubiquitin (Ubl) conjugation pathway by mediating the deneddylation of the cullin subunits of SCF-type E3 ligase complexes, leading to decrease the Ubl ligase activity of SCF-type complexes such as SCF, CSA or DDB2. The complex is also involved in phosphorylation of p53/TP53, c-jun/JUN, IkappaBalpha/NFKBIA, ITPK1 and IRF8/ICSBP, possibly via its association with CK2 and PKD kinases. CSN-dependent phosphorylation of TP53 and JUN promotes and protects degradation by the Ubl system, respectively. The protein is COP9 signalosome complex subunit 3 (COPS3) of Homo sapiens (Human).